Consider the following 444-residue polypeptide: Adenylosuccinate lyase (444 aa).

Residues Arg-9–Tyr-10, Lys-73–Asp-75, and Thr-97–Ser-98 contribute to the N(6)-(1,2-dicarboxyethyl)-AMP site. His-145 serves as the catalytic Proton donor/acceptor. Gln-219 provides a ligand contact to N(6)-(1,2-dicarboxyethyl)-AMP. Ser-269 functions as the Proton donor/acceptor in the catalytic mechanism. N(6)-(1,2-dicarboxyethyl)-AMP-binding positions include Ser-270, Lys-275–Asn-277, Asn-283, and Ser-314–Ile-318.

It belongs to the lyase 1 family. Adenylosuccinate lyase subfamily. In terms of assembly, homotetramer. Residues from neighboring subunits contribute catalytic and substrate-binding residues to each active site.

It catalyses the reaction N(6)-(1,2-dicarboxyethyl)-AMP = fumarate + AMP. The catalysed reaction is (2S)-2-[5-amino-1-(5-phospho-beta-D-ribosyl)imidazole-4-carboxamido]succinate = 5-amino-1-(5-phospho-beta-D-ribosyl)imidazole-4-carboxamide + fumarate. It functions in the pathway purine metabolism; AMP biosynthesis via de novo pathway; AMP from IMP: step 2/2. Its pathway is purine metabolism; IMP biosynthesis via de novo pathway; 5-amino-1-(5-phospho-D-ribosyl)imidazole-4-carboxamide from 5-amino-1-(5-phospho-D-ribosyl)imidazole-4-carboxylate: step 2/2. Its function is as follows. Catalyzes two reactions in de novo purine nucleotide biosynthesis. Catalyzes the breakdown of 5-aminoimidazole- (N-succinylocarboxamide) ribotide (SAICAR or 2-[5-amino-1-(5-phospho-beta-D-ribosyl)imidazole-4-carboxamido]succinate) to 5-aminoimidazole-4-carboxamide ribotide (AICAR or 5-amino-1-(5-phospho-beta-D-ribosyl)imidazole-4-carboxamide) and fumarate, and of adenylosuccinate (ADS or N(6)-(1,2-dicarboxyethyl)-AMP) to adenosine monophosphate (AMP) and fumarate. This Archaeoglobus fulgidus (strain ATCC 49558 / DSM 4304 / JCM 9628 / NBRC 100126 / VC-16) protein is Adenylosuccinate lyase (purB).